A 230-amino-acid polypeptide reads, in one-letter code: 2,3-bisphosphoglycerate-dependent phosphoglycerate mutase (230 aa).

Residues 8 to 15 (RHGESEWN), 21 to 22 (TG), Arg60, 87 to 90 (ERHY), Lys98, 114 to 115 (RR), and 183 to 184 (GN) each bind substrate. His9 (tele-phosphohistidine intermediate) is an active-site residue. The active-site Proton donor/acceptor is Glu87.

It belongs to the phosphoglycerate mutase family. BPG-dependent PGAM subfamily.

It carries out the reaction (2R)-2-phosphoglycerate = (2R)-3-phosphoglycerate. It participates in carbohydrate degradation; glycolysis; pyruvate from D-glyceraldehyde 3-phosphate: step 3/5. Catalyzes the interconversion of 2-phosphoglycerate and 3-phosphoglycerate. This chain is 2,3-bisphosphoglycerate-dependent phosphoglycerate mutase, found in Streptococcus pneumoniae (strain ATCC BAA-255 / R6).